Reading from the N-terminus, the 212-residue chain is Glycerol-3-phosphate acyltransferase (212 aa).

The next 5 helical transmembrane spans lie at 3–23 (ILLA…VIVS), 51–71 (KAAI…VWLA), 78–98 (DVAV…PVFF), 115–135 (AVHP…AFFF), and 139–159 (SLAA…LFGT).

This sequence belongs to the PlsY family. As to quaternary structure, probably interacts with PlsX.

Its subcellular location is the cell inner membrane. The enzyme catalyses an acyl phosphate + sn-glycerol 3-phosphate = a 1-acyl-sn-glycero-3-phosphate + phosphate. Its pathway is lipid metabolism; phospholipid metabolism. Its function is as follows. Catalyzes the transfer of an acyl group from acyl-phosphate (acyl-PO(4)) to glycerol-3-phosphate (G3P) to form lysophosphatidic acid (LPA). This enzyme utilizes acyl-phosphate as fatty acyl donor, but not acyl-CoA or acyl-ACP. In Burkholderia vietnamiensis (strain G4 / LMG 22486) (Burkholderia cepacia (strain R1808)), this protein is Glycerol-3-phosphate acyltransferase.